We begin with the raw amino-acid sequence, 287 residues long: UPF0725 protein At1g19060 (287 aa).

It belongs to the UPF0725 (EMB2204) family.

This Arabidopsis thaliana (Mouse-ear cress) protein is UPF0725 protein At1g19060.